A 176-amino-acid chain; its full sequence is Cytochrome b (176 aa).

A run of 3 helical transmembrane segments spans residues 33–53, 77–98, and 113–133; these read FGSLLGLCLLIQILTGLFLAM, WLIRYMHANGASLFFICLFLHV, and WNIGVILLFAVMATAFMGYVL. 2 residues coordinate heme b: His83 and His97.

This sequence belongs to the cytochrome b family. In terms of assembly, the cytochrome bc1 complex contains 11 subunits: 3 respiratory subunits (MT-CYB, CYC1 and UQCRFS1), 2 core proteins (UQCRC1 and UQCRC2) and 6 low-molecular weight proteins (UQCRH/QCR6, UQCRB/QCR7, UQCRQ/QCR8, UQCR10/QCR9, UQCR11/QCR10 and a cleavage product of UQCRFS1). This cytochrome bc1 complex then forms a dimer. Heme b serves as cofactor.

The protein localises to the mitochondrion inner membrane. Functionally, component of the ubiquinol-cytochrome c reductase complex (complex III or cytochrome b-c1 complex) that is part of the mitochondrial respiratory chain. The b-c1 complex mediates electron transfer from ubiquinol to cytochrome c. Contributes to the generation of a proton gradient across the mitochondrial membrane that is then used for ATP synthesis. This Sciurus carolinensis (Eastern gray squirrel) protein is Cytochrome b (MT-CYB).